Here is a 126-residue protein sequence, read N- to C-terminus: Small ribosomal subunit protein uS13 (126 aa).

The segment at 92–126 (HRMGLPVRGQRTRTNARTRRGRRQTVAGKKKAPGK) is disordered. The span at 101 to 126 (QRTRTNARTRRGRRQTVAGKKKAPGK) shows a compositional bias: basic residues.

It belongs to the universal ribosomal protein uS13 family. As to quaternary structure, part of the 30S ribosomal subunit. Forms a loose heterodimer with protein S19. Forms two bridges to the 50S subunit in the 70S ribosome.

In terms of biological role, located at the top of the head of the 30S subunit, it contacts several helices of the 16S rRNA. In the 70S ribosome it contacts the 23S rRNA (bridge B1a) and protein L5 of the 50S subunit (bridge B1b), connecting the 2 subunits; these bridges are implicated in subunit movement. Contacts the tRNAs in the A and P-sites. In Nostoc sp. (strain PCC 7120 / SAG 25.82 / UTEX 2576), this protein is Small ribosomal subunit protein uS13.